Here is a 92-residue protein sequence, read N- to C-terminus: MNKQYSYPLDLSWSTEELASVLSFFNDVEAAYEGKVEAKKLLDSYKGFKAVVPSKSEEKRLGREFETVSGYSLYRAVQAAKEKGKGKISLGK.

Belongs to the UPF0223 family.

The chain is UPF0223 protein SPCG_1392 from Streptococcus pneumoniae (strain CGSP14).